We begin with the raw amino-acid sequence, 253 residues long: Endonuclease NucS (253 aa).

This sequence belongs to the NucS endonuclease family.

It localises to the cytoplasm. In terms of biological role, cleaves both 3' and 5' ssDNA extremities of branched DNA structures. The sequence is that of Endonuclease NucS from Pyrococcus horikoshii (strain ATCC 700860 / DSM 12428 / JCM 9974 / NBRC 100139 / OT-3).